Reading from the N-terminus, the 549-residue chain is Probable glucomannan 4-beta-mannosyltransferase 4 (549 aa).

Residues 35–55 (VAPVLQFAVWACMAMSVMLVL) traverse the membrane as a helical segment. Residue aspartate 151 is part of the active site. 2 residues coordinate substrate: aspartate 210 and aspartate 212. Residue aspartate 304 is part of the active site. 4 helical membrane-spanning segments follow: residues 383–403 (VVAP…SVMV), 406–426 (VSIP…MNAI), 497–517 (IYIP…YDLV), and 523–543 (YYLY…GFAG).

This sequence belongs to the glycosyltransferase 2 family. Plant cellulose synthase-like A subfamily.

It localises to the golgi apparatus membrane. The catalysed reaction is GDP-mannose + (glucomannan)n = GDP + (glucomannan)n+1.. Its function is as follows. Probable mannan synthase which consists of a 4-beta-mannosyltransferase activity on mannan using GDP-mannose. The beta-1,4-mannan product is the backbone for galactomannan synthesis by galactomannan galactosyltransferase. Galactomannan is a noncellulosic polysaccharides of plant cell wall. This Oryza sativa subsp. japonica (Rice) protein is Probable glucomannan 4-beta-mannosyltransferase 4.